The following is a 153-amino-acid chain: Xanthine-guanine phosphoribosyltransferase (153 aa).

Residues 37–38 and 89–97 each bind 5-phospho-alpha-D-ribose 1-diphosphate; these read RG and DDLVDTGNT. Asp90 is a Mg(2+) binding site. Residues Asp93 and Ile136 each contribute to the guanine site. 2 residues coordinate xanthine: Asp93 and Ile136. GMP contacts are provided by residues 93–97 and 135–136; these read DTGNT and WI.

This sequence belongs to the purine/pyrimidine phosphoribosyltransferase family. XGPT subfamily. Homotetramer. The cofactor is Mg(2+).

The protein resides in the cell inner membrane. The enzyme catalyses GMP + diphosphate = guanine + 5-phospho-alpha-D-ribose 1-diphosphate. It carries out the reaction XMP + diphosphate = xanthine + 5-phospho-alpha-D-ribose 1-diphosphate. It catalyses the reaction IMP + diphosphate = hypoxanthine + 5-phospho-alpha-D-ribose 1-diphosphate. The protein operates within purine metabolism; GMP biosynthesis via salvage pathway; GMP from guanine: step 1/1. Its pathway is purine metabolism; XMP biosynthesis via salvage pathway; XMP from xanthine: step 1/1. Purine salvage pathway enzyme that catalyzes the transfer of the ribosyl-5-phosphate group from 5-phospho-alpha-D-ribose 1-diphosphate (PRPP) to the N9 position of the 6-oxopurines guanine and xanthine to form the corresponding ribonucleotides GMP (guanosine 5'-monophosphate) and XMP (xanthosine 5'-monophosphate), with the release of PPi. To a lesser extent, also acts on hypoxanthine. This is Xanthine-guanine phosphoribosyltransferase from Pasteurella multocida (strain Pm70).